The following is a 281-amino-acid chain: Sulfur carrier protein FdhD (281 aa).

The active-site Cysteine persulfide intermediate is Cys117.

This sequence belongs to the FdhD family.

It is found in the cytoplasm. Required for formate dehydrogenase (FDH) activity. Acts as a sulfur carrier protein that transfers sulfur from IscS to the molybdenum cofactor prior to its insertion into FDH. The protein is Sulfur carrier protein FdhD of Xanthomonas euvesicatoria pv. vesicatoria (strain 85-10) (Xanthomonas campestris pv. vesicatoria).